A 387-amino-acid chain; its full sequence is Acyl-[acyl-carrier-protein] 6-desaturase (387 aa).

A chloroplast-targeting transit peptide spans 1-29 (MALVFKSIGAHKTPPCTLNLASPALYHTR). The Fe cation site is built by glutamate 131, glutamate 169, histidine 172, glutamate 222, glutamate 255, and histidine 258.

It belongs to the fatty acid desaturase type 2 family. It depends on Fe(2+) as a cofactor.

It is found in the plastid. The protein resides in the chloroplast. It carries out the reaction hexadecanoyl-[ACP] + 2 reduced [2Fe-2S]-[ferredoxin] + O2 + 2 H(+) = (6Z)-hexadecenoyl-[ACP] + 2 oxidized [2Fe-2S]-[ferredoxin] + 2 H2O. It functions in the pathway lipid metabolism; fatty acid metabolism. Its activity is regulated as follows. Inhibited by KCN or H(2)O(2). Its function is as follows. Delta(6) fatty acid desaturase introducing a cis double bond at carbon 6 of palmitoyl-[acyl-carrier protein](16:0-ACP), producing 16:1(6Z)-ACP. No activity with the coenzyme A ester of the fatty acid. The position of the double bond is determined by its distance from the carboxyl end of the fatty acid. Low activity with several saturated acyl-[acyl-carrier protein]s, including 14:0-ACP and 18:0-ACP. Requires reduced ferredoxin for detectable in vitro activity. In Thunbergia alata (Black-eyed Susan vine), this protein is Acyl-[acyl-carrier-protein] 6-desaturase.